Reading from the N-terminus, the 481-residue chain is MSSSSHNDNKIPPEKTTTPPLSSSNEDIYNPADSSNVLSSNQTLVSTNNNNNNNQNNNQNNNQNNDGKDTMDHLSYLSTIDSKRREQSYLKSFYQRFIIEDVVKNFTPAYFVSVMGTGISSSLLYNFPFPAYWLQICGYVMFGLTCTFFIGNIILLIMSCAYYPNRFRDYHVDPSRAVFMGAFSMGYITIVNFIALITKGEHIYFVWTLWWLAVFSAMYTSFLIVYLSFMSKLNESDVEAKLNATLLLPIVAITVVSSSGHSIELDLPHVHQTVLTMIVSFMLWSLSISMAFMVMTLYMGRLIIHKIPPTNLIMTSFLPVGFLGQSSYSIYLFGNNLNKFIPEELLYGKISLCLSGFVSVFLLSFGYFMCFVAVTSVLSKIRPFAKNPNPSHTNRFGLLKLEKSFWSMTFPMGTMSLSNTEIGHGGVGNYPLLTFKVMGSIFAAACIFITVGCSIGVVVYSFKKLREDMTNKNKYRNESMV.

The disordered stretch occupies residues 1-71 (MSSSSHNDNK…NQNNDGKDTM (71 aa)). At 1-108 (MSSSSHNDNK…IEDVVKNFTP (108 aa)) the chain is on the cytoplasmic side. Residues 15 to 47 (KTTTPPLSSSNEDIYNPADSSNVLSSNQTLVST) show a composition bias toward polar residues. The span at 48 to 65 (NNNNNNNQNNNQNNNQNN) shows a compositional bias: low complexity. A helical transmembrane segment spans residues 109 to 129 (AYFVSVMGTGISSSLLYNFPF). Residues 130-137 (PAYWLQIC) lie on the Extracellular side of the membrane. Residues 138–158 (GYVMFGLTCTFFIGNIILLIM) form a helical membrane-spanning segment. Residues 159–176 (SCAYYPNRFRDYHVDPSR) lie on the Cytoplasmic side of the membrane. A helical membrane pass occupies residues 177 to 197 (AVFMGAFSMGYITIVNFIALI). The Extracellular segment spans residues 198–204 (TKGEHIY). The helical transmembrane segment at 205–225 (FVWTLWWLAVFSAMYTSFLIV) threads the bilayer. The Cytoplasmic portion of the chain corresponds to 226–244 (YLSFMSKLNESDVEAKLNA). A helical transmembrane segment spans residues 245 to 265 (TLLLPIVAITVVSSSGHSIEL). The Extracellular segment spans residues 266–273 (DLPHVHQT). The helical transmembrane segment at 274-294 (VLTMIVSFMLWSLSISMAFMV) threads the bilayer. The Cytoplasmic segment spans residues 295–312 (MTLYMGRLIIHKIPPTNL). Residues 313–333 (IMTSFLPVGFLGQSSYSIYLF) traverse the membrane as a helical segment. The Extracellular portion of the chain corresponds to 334–353 (GNNLNKFIPEELLYGKISLC). The helical transmembrane segment at 354-374 (LSGFVSVFLLSFGYFMCFVAV) threads the bilayer. At 375-438 (TSVLSKIRPF…NYPLLTFKVM (64 aa)) the chain is on the cytoplasmic side. Residues 439-459 (GSIFAAACIFITVGCSIGVVV) form a helical membrane-spanning segment. The Extracellular portion of the chain corresponds to 460 to 481 (YSFKKLREDMTNKNKYRNESMV).

This sequence belongs to the tellurite-resistance/dicarboxylate transporter (TDT) family.

The protein localises to the cell membrane. Functionally, sulfite efflux pump required for the secretion of sulfite as a reducing agent. Plays a role in resistance to neutrophils during infection. Involved in transition to filamentous growth, which is believed to be central to the virulence of this human pathogen. The polypeptide is Sulfite efflux pump SSU1 (SSU1) (Candida albicans (strain SC5314 / ATCC MYA-2876) (Yeast)).